Reading from the N-terminus, the 464-residue chain is Fumarate hydratase class II (464 aa).

Substrate contacts are provided by residues 98–100, R126, 129–132, 139–141, and T187; these read SGT, HPND, and SSN. H188 functions as the Proton donor/acceptor in the catalytic mechanism. S318 is a catalytic residue. Residues S319 and 324–326 each bind substrate; that span reads KVN.

It belongs to the class-II fumarase/aspartase family. Fumarase subfamily. In terms of assembly, homotetramer.

The protein resides in the cytoplasm. It catalyses the reaction (S)-malate = fumarate + H2O. Its pathway is carbohydrate metabolism; tricarboxylic acid cycle; (S)-malate from fumarate: step 1/1. Its function is as follows. Involved in the TCA cycle. Catalyzes the stereospecific interconversion of fumarate to L-malate. The sequence is that of Fumarate hydratase class II from Photorhabdus laumondii subsp. laumondii (strain DSM 15139 / CIP 105565 / TT01) (Photorhabdus luminescens subsp. laumondii).